A 414-amino-acid chain; its full sequence is Histidine--tRNA ligase (414 aa).

It belongs to the class-II aminoacyl-tRNA synthetase family. Homodimer.

It localises to the cytoplasm. It carries out the reaction tRNA(His) + L-histidine + ATP = L-histidyl-tRNA(His) + AMP + diphosphate + H(+). The polypeptide is Histidine--tRNA ligase (Ehrlichia ruminantium (strain Gardel)).